The chain runs to 175 residues: Co-chaperone protein HscB homolog (175 aa).

The J domain occupies 7 to 79 (SHFDLFDLPA…LKRATYLLHL (73 aa)).

The protein belongs to the HscB family. In terms of assembly, interacts with HscA and stimulates its ATPase activity.

Its function is as follows. Co-chaperone involved in the maturation of iron-sulfur cluster-containing proteins. Seems to help targeting proteins to be folded toward HscA. This Paraburkholderia xenovorans (strain LB400) protein is Co-chaperone protein HscB homolog.